The chain runs to 309 residues: Glutaminase (309 aa).

Substrate contacts are provided by S65, N117, E162, N169, Y193, Y245, and V263.

Belongs to the glutaminase family. As to quaternary structure, homotetramer.

The enzyme catalyses L-glutamine + H2O = L-glutamate + NH4(+). This is Glutaminase from Clostridioides difficile (strain 630) (Peptoclostridium difficile).